A 28-amino-acid polypeptide reads, in one-letter code: Dermaseptin-DI2 (28 aa).

In terms of tissue distribution, expressed by the skin glands.

It localises to the secreted. In terms of biological role, has antibacterial activity against the Gram-positive bacteria S.aureus and E.faecalis, and the Gram-negative bacteria P.aeruginosa and E.coli. Has antiprotozoal activity against T.cruzi. Has antifungal activity against the yeasts C.tropicalis (MIC=10.9 uM), C.guilliermondii (MIC=21.8 uM), C.albicans (MIC=21.8 uM) and C.albicans ATCC 1023 (MIC=10.9 uM). Decreases viability of murine peritoneal cells. Fuses to, and disrupts liposomes. This chain is Dermaseptin-DI2, found in Phyllomedusa distincta (Monkey frog).